A 221-amino-acid polypeptide reads, in one-letter code: Urease accessory protein UreF (221 aa).

This sequence belongs to the UreF family. In terms of assembly, ureD, UreF and UreG form a complex that acts as a GTP-hydrolysis-dependent molecular chaperone, activating the urease apoprotein by helping to assemble the nickel containing metallocenter of UreC. The UreE protein probably delivers the nickel.

It is found in the cytoplasm. Functionally, required for maturation of urease via the functional incorporation of the urease nickel metallocenter. In Teredinibacter turnerae (strain ATCC 39867 / T7901), this protein is Urease accessory protein UreF.